Reading from the N-terminus, the 311-residue chain is Vomeronasal type-1 receptor 105 (311 aa).

Over 1–17 the chain is Extracellular; the sequence is MMNKNSRLYTDSNIRNT. Residues 18 to 38 traverse the membrane as a helical segment; it reads FFAEIGIGVSANSLLLLFNIF. Topologically, residues 39–50 are cytoplasmic; the sequence is KLICGQRSRLTD. A helical membrane pass occupies residues 51-71; sequence LPIGLLSLINLLMLLMTAFIA. Topologically, residues 72 to 94 are extracellular; it reads TDTFISWRGWDDIICKSLLYLYR. Cysteines 86 and 173 form a disulfide. A helical membrane pass occupies residues 95 to 115; that stretch reads TFRGLSLCTSCLLSVLQAIIL. The Cytoplasmic portion of the chain corresponds to 116–135; the sequence is SPRSSCLAKFKHKPSHHISC. The helical transmembrane segment at 136 to 156 threads the bilayer; sequence AILSLSVLYMFISSHLLVSII. At 157-188 the chain is on the extracellular side; it reads ATPNLTTNDFIHVTQWCSILPMSYLMQSMFST. N-linked (GlcNAc...) asparagine glycosylation is present at Asn-160. Residues 189–209 form a helical membrane-spanning segment; it reads LLAIRDVFLISLMVLSTWYMV. Residues 210–239 lie on the Cytoplasmic side of the membrane; sequence ALLCRHRKQTRHLQGTSLSPKASPEQRATR. Residues 240–260 form a helical membrane-spanning segment; sequence SILMLMSLFVLMSVFDSIVCS. The Extracellular portion of the chain corresponds to 261-271; it reads SRTMYLNDPIS. A helical transmembrane segment spans residues 272 to 292; the sequence is YSYQLFMVHIYATVSPFVFIV. Residues 293-311 are Cytoplasmic-facing; that stretch reads TEKHIVNSLRSMCVKVMNV.

Belongs to the G-protein coupled receptor 1 family. Expressed in 1-4% of neurons of the vomeronasal organ. Only one pheromone receptor gene may be expressed in a particular neuron. Not expressed in the main olfactory epithelium.

It is found in the cell membrane. Functionally, putative pheromone receptor implicated in the regulation of social as well as reproductive behavior. The sequence is that of Vomeronasal type-1 receptor 105 (Vom1r105) from Rattus norvegicus (Rat).